The following is a 427-amino-acid chain: Probable purple acid phosphatase 20 (427 aa).

Positions 1–21 (MVKVLGLVAILLIVLAGNVLS) are cleaved as a signal peptide. The N-linked (GlcNAc...) asparagine glycan is linked to N85. The Fe cation site is built by D147, D174, and Y177. Zn(2+) is bound at residue D174. The Zn(2+) site is built by N207 and H291. Substrate is bound at residue N207. Residue H301 is the Proton donor of the active site. H330 lines the Zn(2+) pocket. 330 to 332 (HVH) lines the substrate pocket. H332 provides a ligand contact to Fe cation. An N-linked (GlcNAc...) asparagine glycan is attached at N392.

Belongs to the metallophosphoesterase superfamily. Purple acid phosphatase family. Homodimer. Fe cation is required as a cofactor. The cofactor is Zn(2+). In terms of tissue distribution, expressed flowers and siliques.

It is found in the secreted. The catalysed reaction is a phosphate monoester + H2O = an alcohol + phosphate. This is Probable purple acid phosphatase 20 (PAP20) from Arabidopsis thaliana (Mouse-ear cress).